We begin with the raw amino-acid sequence, 484 residues long: Perphorin-2 (484 aa).

N-linked (GlcNAc...) asparagine glycosylation is found at N16, N240, N256, N265, N326, N330, N356, and N411.

The protein localises to the secreted. It is found in the extracellular space. The protein resides in the extracellular matrix. In terms of biological role, may be involved in conversion of asexual males and females to the sexual pathway. The sequence is that of Perphorin-2 from Volvox carteri (Green alga).